The chain runs to 566 residues: Malate synthase, glyoxysomal (566 aa).

R179 acts as the Proton acceptor in catalysis. D465 functions as the Proton donor in the catalytic mechanism. A Microbody targeting signal motif is present at residues 564–566 (SRL).

Belongs to the malate synthase family.

It localises to the glyoxysome. The catalysed reaction is glyoxylate + acetyl-CoA + H2O = (S)-malate + CoA + H(+). It participates in carbohydrate metabolism; glyoxylate cycle; (S)-malate from isocitrate: step 2/2. This is Malate synthase, glyoxysomal (MLS) from Raphanus sativus (Radish).